The following is an 89-amino-acid chain: MSIKLINIGFGNIVSANRLVAIVSPESAPIKRIIQEARDRGMLIDATYGRRTRAVIITDSDHVILSAVQPETVAHRLSTKEEVVVEDDE.

The protein belongs to the RemA family.

The sequence is that of Putative regulatory protein CPE1749 from Clostridium perfringens (strain 13 / Type A).